The sequence spans 696 residues: Glycosyltransferase GlyA (696 aa).

The interval 1-301 is GT2 domain; it reads MLVDDKITVI…NQLSRQEESE (301 aa). The segment at 302-556 is GT8 domain; the sequence is KKAIVLAANY…TELGQNHHLH (255 aa). Residues 308–313 and 399–400 each bind UDP; these read AANYGY and DC. Mn(2+) is bound by residues aspartate 399, aspartate 401, and histidine 518. Position 518–524 (518–524) interacts with UDP; the sequence is HYLSHRK.

It in the N-terminal section; belongs to the glycosyltransferase 2 family. The protein in the central section; belongs to the glycosyltransferase 8 family.

It participates in protein modification; protein glycosylation. Its function is as follows. Involved in the polymorphic O-glycosylation of the serine-rich repeat protein PsrP. Catalyzes the fourth step in glycosylation of PsrP in this bacteria. Can transfer the sugar from UDP-galactose to the terminal sugar moiety of PsrP-GlcNAc-Glc-Gal or of PsrP-GlcNAc-Glc-Glc (using truncated substrates with the PsrP SSR1 domain). Has hydrolytic activity against UDP-galactose and to a lesser extent against UDP-glucose. The protein is Glycosyltransferase GlyA of Streptococcus pneumoniae serotype 4 (strain ATCC BAA-334 / TIGR4).